The primary structure comprises 491 residues: Feruloyl-CoA synthase (491 aa).

Thr154 provides a ligand contact to Mg(2+). 3 residues coordinate ATP: Ala199, Gly291, and Thr295. Glu296 is a binding site for Mg(2+). The ATP site is built by Asp374 and Lys391.

Belongs to the ATP-dependent AMP-binding enzyme family. Requires Mg(2+) as cofactor.

The catalysed reaction is (E)-ferulate + ATP + CoA = (E)-feruloyl-CoA + AMP + diphosphate. In terms of biological role, catalyzes the formation of (E)-feruloyl-CoA, AMP and diphosphate from (E)-ferulate, CoA and ATP. Involved in the degradation pathway of lignin-derived aromatic compounds of plant cell walls. Catalyzes the first enzymatic step in the conversion of ferulic acid into high value compound vanillin. The polypeptide is Feruloyl-CoA synthase (Amycolatopsis sp).